We begin with the raw amino-acid sequence, 126 residues long: UPF0538 protein C2orf76 homolog (126 aa).

This sequence belongs to the UPF0538 family.

The protein is UPF0538 protein C2orf76 homolog of Danio rerio (Zebrafish).